A 49-amino-acid chain; its full sequence is Large ribosomal subunit protein bL33B (49 aa).

The protein belongs to the bacterial ribosomal protein bL33 family.

The sequence is that of Large ribosomal subunit protein bL33B from Latilactobacillus sakei subsp. sakei (strain 23K) (Lactobacillus sakei subsp. sakei).